Consider the following 573-residue polypeptide: Sulfate adenylyltransferase (573 aa).

Residues 1–169 form an N-terminal region; that stretch reads MANSPHGGVL…LEAVNRLQHY (169 aa). Residues 170 to 394 are catalytic; sequence DFVELRYTPS…LRESHPPRSQ (225 aa). Gln-197 lines the sulfate pocket. Residues 197–200 and 291–294 each bind ATP; these read QTRN and GRDH. Residues Thr-198, Arg-199, and Asn-200 contribute to the active site. Arg-199 lines the sulfate pocket. A sulfate-binding site is contributed by Ala-295. An ATP-binding site is contributed by Met-333. The allosteric regulation domain; adenylyl-sulfate kinase-like stretch occupies residues 395-573; that stretch reads QGFTIFLTGY…LESQGLLDRF (179 aa). Residues 434-437, Arg-451, 477-478, and Arg-515 each bind 3'-phosphoadenylyl sulfate; these read ETVR and IA.

In the N-terminal section; belongs to the sulfate adenylyltransferase family. The protein in the C-terminal section; belongs to the APS kinase family. In terms of assembly, homohexamer. Dimer of trimers.

Its subcellular location is the cytoplasm. The catalysed reaction is sulfate + ATP + H(+) = adenosine 5'-phosphosulfate + diphosphate. It participates in sulfur metabolism; hydrogen sulfide biosynthesis; sulfite from sulfate: step 1/3. With respect to regulation, allosterically inhibited by 3'-phosphoadenosine 5'-phosphosulfate (PAPS). In terms of biological role, catalyzes the first intracellular reaction of sulfate assimilation, forming adenosine-5'-phosphosulfate (APS) from inorganic sulfate and ATP. Plays an important role in sulfate activation as a component of the biosynthesis pathway of sulfur-containing amino acids. The chain is Sulfate adenylyltransferase from Chaetomium globosum (strain ATCC 6205 / CBS 148.51 / DSM 1962 / NBRC 6347 / NRRL 1970) (Soil fungus).